A 202-amino-acid chain; its full sequence is LexA repressor (202 aa).

Residues 29 to 49 (VREICTAVGLKSTSTVHSYLE) constitute a DNA-binding region (H-T-H motif). Catalysis depends on for autocatalytic cleavage activity residues S125 and K162.

It belongs to the peptidase S24 family. In terms of assembly, homodimer.

The catalysed reaction is Hydrolysis of Ala-|-Gly bond in repressor LexA.. In terms of biological role, represses a number of genes involved in the response to DNA damage (SOS response), including recA and lexA. In the presence of single-stranded DNA, RecA interacts with LexA causing an autocatalytic cleavage which disrupts the DNA-binding part of LexA, leading to derepression of the SOS regulon and eventually DNA repair. This is LexA repressor from Clostridium kluyveri (strain NBRC 12016).